The primary structure comprises 160 residues: Lymphocyte antigen 86 (160 aa).

Positions 1–20 (MKTLNVLALVLVLLCINAST) are cleaved as a signal peptide. Cystine bridges form between cysteine 28/cysteine 53, cysteine 40/cysteine 149, and cysteine 97/cysteine 107.

M-shaped tetramer of two CD180-LY86 heterodimers. In terms of tissue distribution, detected in the macrophage-like 10.4 cells.

It is found in the secreted. The protein resides in the extracellular space. May cooperate with CD180 and TLR4 to mediate the innate immune response to bacterial lipopolysaccharide (LPS) and cytokine production. Important for efficient CD180 cell surface expression. The polypeptide is Lymphocyte antigen 86 (LY86) (Gallus gallus (Chicken)).